A 58-amino-acid polypeptide reads, in one-letter code: Curromycin resistance protein (58 aa).

The segment at 1–37 is disordered; sequence MSVVALGATSITPPHGPESQGRPFPARGPVRPSARAR. Positions 25–37 are enriched in low complexity; the sequence is PARGPVRPSARAR.

The chain is Curromycin resistance protein (cre) from Streptomyces hygroscopicus.